Reading from the N-terminus, the 164-residue chain is Protein SprT (164 aa).

The SprT-like domain maps to 14 to 156 (QQAETFFKRP…LCRRCREILV (143 aa)). His-69 contacts Zn(2+). Residue Glu-70 is part of the active site. Zn(2+) is bound at residue His-73.

The protein belongs to the SprT family. Zn(2+) is required as a cofactor.

The protein localises to the cytoplasm. The chain is Protein SprT from Pseudomonas entomophila (strain L48).